Consider the following 259-residue polypeptide: GTP cyclohydrolase FolE2 (259 aa).

This sequence belongs to the GTP cyclohydrolase IV family.

It carries out the reaction GTP + H2O = 7,8-dihydroneopterin 3'-triphosphate + formate + H(+). It functions in the pathway cofactor biosynthesis; 7,8-dihydroneopterin triphosphate biosynthesis; 7,8-dihydroneopterin triphosphate from GTP: step 1/1. Functionally, converts GTP to 7,8-dihydroneopterin triphosphate. This is GTP cyclohydrolase FolE2 from Thermotoga petrophila (strain ATCC BAA-488 / DSM 13995 / JCM 10881 / RKU-1).